Here is a 314-residue protein sequence, read N- to C-terminus: Olfactory receptor 6C6 (314 aa).

Topologically, residues 1–24 are extracellular; it reads MKNKSMEIEFILLGLTDDPQLQIV. A glycan (N-linked (GlcNAc...) asparagine) is linked at Asn3. Residues 25 to 45 form a helical membrane-spanning segment; the sequence is IFLFLFLNYTLSLMGNLIIII. The Cytoplasmic segment spans residues 46–63; it reads LTLLDPRLKTPMYFFLRN. The helical transmembrane segment at 64–84 threads the bilayer; that stretch reads FSFLEVIFTTVCIPRFLITIV. The Extracellular segment spans residues 85–95; it reads TRDKTISYNNC. A disulfide bridge links Cys95 with Cys177. The helical transmembrane segment at 96-116 threads the bilayer; it reads ATQLFFILLPGVTEFYLLAAM. The Cytoplasmic portion of the chain corresponds to 117–141; it reads SYDRYVAICKPLHYPIIMSSKVCYQ. Residues 142-162 traverse the membrane as a helical segment; that stretch reads LVLSSWVTGFLIIFPPLVMGL. Residues 163–199 are Extracellular-facing; sequence KLDFCASKTIDHFMCETSPILQISCTDTHVLELMSFT. Residues 200 to 220 form a helical membrane-spanning segment; the sequence is LAVVTLVVTLVLVILSYTCII. Topologically, residues 221–237 are cytoplasmic; it reads KTILKFSSAQQRNKAFS. A helical transmembrane segment spans residues 238–258; that stretch reads TCTSHMIVVSMTYGSCIFMYI. At 259–269 the chain is on the extracellular side; that stretch reads KPSAKERVTVS. A helical transmembrane segment spans residues 270–290; it reads KGVALLYTSIAPLLNPFIYTL. Over 291-314 the chain is Cytoplasmic; that stretch reads RNQQVKEVFWDVLQKNLCFSKRPF.

This sequence belongs to the G-protein coupled receptor 1 family.

Its subcellular location is the cell membrane. Functionally, odorant receptor. The sequence is that of Olfactory receptor 6C6 (OR6C6) from Homo sapiens (Human).